The primary structure comprises 209 residues: Outer-membrane lipoprotein carrier protein (209 aa).

The N-terminal stretch at 1-23 (MKNLLKKSLLGLAFLSLNGFAFA) is a signal peptide.

Belongs to the LolA family. As to quaternary structure, monomer.

It is found in the periplasm. Functionally, participates in the translocation of lipoproteins from the inner membrane to the outer membrane. Only forms a complex with a lipoprotein if the residue after the N-terminal Cys is not an aspartate (The Asp acts as a targeting signal to indicate that the lipoprotein should stay in the inner membrane). The polypeptide is Outer-membrane lipoprotein carrier protein (Glaesserella parasuis serovar 5 (strain SH0165) (Haemophilus parasuis)).